We begin with the raw amino-acid sequence, 115 residues long: T cell receptor beta variable 2 (115 aa).

The N-terminal stretch at 1-19 is a signal peptide; sequence MDTWLVCWAIFSLLKAGLT. Positions 21–115 constitute an Ig-like domain; the sequence is PEVTQTPSHQ…SAMYFCASSE (95 aa). A disulfide bond links C42 and C111. The N-linked (GlcNAc...) asparagine glycan is linked to N93.

As to quaternary structure, alpha-beta TR is a heterodimer composed of an alpha and beta chain; disulfide-linked. The alpha-beta TR is associated with the transmembrane signaling CD3 coreceptor proteins to form the TR-CD3 (TcR or TCR). The assembly of alpha-beta TR heterodimers with CD3 occurs in the endoplasmic reticulum where a single alpha-beta TR heterodimer associates with one CD3D-CD3E heterodimer, one CD3G-CD3E heterodimer and one CD247 homodimer forming a stable octameric structure. CD3D-CD3E and CD3G-CD3E heterodimers preferentially associate with TR alpha and TR beta chains, respectively. The association of the CD247 homodimer is the last step of TcR assembly in the endoplasmic reticulum and is required for transport to the cell surface.

It is found in the cell membrane. Its function is as follows. V region of the variable domain of T cell receptor (TR) beta chain that participates in the antigen recognition. Alpha-beta T cell receptors are antigen specific receptors which are essential to the immune response and are present on the cell surface of T lymphocytes. Recognize peptide-major histocompatibility (MH) (pMH) complexes that are displayed by antigen presenting cells (APC), a prerequisite for efficient T cell adaptive immunity against pathogens. Binding of alpha-beta TR to pMH complex initiates TR-CD3 clustering on the cell surface and intracellular activation of LCK that phosphorylates the ITAM motifs of CD3G, CD3D, CD3E and CD247 enabling the recruitment of ZAP70. In turn ZAP70 phosphorylates LAT, which recruits numerous signaling molecules to form the LAT signalosome. The LAT signalosome propagates signal branching to three major signaling pathways, the calcium, the mitogen-activated protein kinase (MAPK) kinase and the nuclear factor NF-kappa-B (NF-kB) pathways, leading to the mobilization of transcription factors that are critical for gene expression and essential for T cell growth and differentiation. The T cell repertoire is generated in the thymus, by V-(D)-J rearrangement. This repertoire is then shaped by intrathymic selection events to generate a peripheral T cell pool of self-MH restricted, non-autoaggressive T cells. Post-thymic interaction of alpha-beta TR with the pMH complexes shapes TR structural and functional avidity. The protein is T cell receptor beta variable 2 of Homo sapiens (Human).